The chain runs to 508 residues: Photosystem II CP47 reaction center protein (508 aa).

The next 6 helical transmembrane spans lie at 21–36 (SVHI…WAGS), 101–115 (IVFS…IWHW), 140–156 (GIHL…FGAF), 203–218 (IAAG…FHLS), 237–252 (VLSS…AFVV), and 457–472 (SFAL…HGAR).

This sequence belongs to the PsbB/PsbC family. PsbB subfamily. As to quaternary structure, PSII is composed of 1 copy each of membrane proteins PsbA, PsbB, PsbC, PsbD, PsbE, PsbF, PsbH, PsbI, PsbJ, PsbK, PsbL, PsbM, PsbT, PsbX, PsbY, PsbZ, Psb30/Ycf12, at least 3 peripheral proteins of the oxygen-evolving complex and a large number of cofactors. It forms dimeric complexes. Binds multiple chlorophylls. PSII binds additional chlorophylls, carotenoids and specific lipids. is required as a cofactor.

The protein resides in the plastid. It localises to the chloroplast thylakoid membrane. Functionally, one of the components of the core complex of photosystem II (PSII). It binds chlorophyll and helps catalyze the primary light-induced photochemical processes of PSII. PSII is a light-driven water:plastoquinone oxidoreductase, using light energy to abstract electrons from H(2)O, generating O(2) and a proton gradient subsequently used for ATP formation. In Nasturtium officinale (Watercress), this protein is Photosystem II CP47 reaction center protein.